The following is a 396-amino-acid chain: L-lactate dehydrogenase (396 aa).

The 380-residue stretch at 1–380 (MIISAASDYR…SGDSLVQELG (380 aa)) folds into the FMN hydroxy acid dehydrogenase domain. Tyrosine 24 serves as a coordination point for substrate. Residues serine 106 and glutamine 127 each contribute to the FMN site. Substrate is bound at residue tyrosine 129. Threonine 155 is an FMN binding site. Arginine 164 is a substrate binding site. Residue lysine 251 coordinates FMN. Catalysis depends on histidine 275, which acts as the Proton acceptor. Arginine 278 contacts substrate. 306-330 (DSGIRNGLDVVRMIALGADTVLLGR) contacts FMN.

It belongs to the FMN-dependent alpha-hydroxy acid dehydrogenase family. Requires FMN as cofactor.

It is found in the cell inner membrane. It catalyses the reaction (S)-lactate + A = pyruvate + AH2. Its function is as follows. Catalyzes the conversion of L-lactate to pyruvate. Is coupled to the respiratory chain. The polypeptide is L-lactate dehydrogenase (Salmonella typhimurium (strain LT2 / SGSC1412 / ATCC 700720)).